The chain runs to 299 residues: Protein U23 (299 aa).

An N-terminal signal peptide occupies residues 1–27 (MRKSEFNAKSCFLMIGICVFNLNSSSC). The helical transmembrane segment at 247–267 (LVIWICGISFVGAFIIVIVIL) threads the bilayer.

The protein resides in the host membrane. The chain is Protein U23 (U23) from Human herpesvirus 6B (strain Z29) (HHV-6 variant B).